The following is a 530-amino-acid chain: FSD1-like protein (530 aa).

Residue Met-1 is modified to N-acetylmethionine. The stretch at 102 to 141 forms a coiled coil; the sequence is KQEQARKSQELQSQISQCNNALENSEELLEFATRSLDIKE. Residues 137-194 enclose the COS domain; the sequence is LDIKEPEEFSKAARQIKDRVTMASAFRLSLKPKVSDNMTHLMVDFSQERQMLQTLKFL. The region spanning 196–300 is the Fibronectin type-III domain; sequence VPKAPEIDPV…DPVTLETKAL (105 aa). Residues 300–506 enclose the B30.2/SPRY domain; the sequence is LNFNLDNSSS…LSTGMQVPSA (207 aa). Residues 322–366 are disordered; sequence WDPTGGKGQESKIKGKENKGRSGTPSPKRTSVGSRPPAVRGSRDR. The segment covering 330–341 has biased composition (basic and acidic residues); sequence QESKIKGKENKG. Over residues 342–354 the composition is skewed to polar residues; it reads RSGTPSPKRTSVG. Phosphoserine occurs at positions 520 and 523.

This is FSD1-like protein (FSD1L) from Homo sapiens (Human).